A 640-amino-acid chain; its full sequence is 1-deoxy-D-xylulose-5-phosphate synthase (640 aa).

Thiamine diphosphate-binding positions include His-79 and 120–122; that span reads GHS. Asp-151 is a binding site for Mg(2+). Residues 152-153, Asn-180, Tyr-288, and Glu-372 contribute to the thiamine diphosphate site; that span reads GG. Asn-180 lines the Mg(2+) pocket.

Belongs to the transketolase family. DXPS subfamily. In terms of assembly, homodimer. It depends on Mg(2+) as a cofactor. Thiamine diphosphate serves as cofactor.

It catalyses the reaction D-glyceraldehyde 3-phosphate + pyruvate + H(+) = 1-deoxy-D-xylulose 5-phosphate + CO2. It functions in the pathway metabolic intermediate biosynthesis; 1-deoxy-D-xylulose 5-phosphate biosynthesis; 1-deoxy-D-xylulose 5-phosphate from D-glyceraldehyde 3-phosphate and pyruvate: step 1/1. In terms of biological role, catalyzes the acyloin condensation reaction between C atoms 2 and 3 of pyruvate and glyceraldehyde 3-phosphate to yield 1-deoxy-D-xylulose-5-phosphate (DXP). The protein is 1-deoxy-D-xylulose-5-phosphate synthase of Nitrosococcus oceani (strain ATCC 19707 / BCRC 17464 / JCM 30415 / NCIMB 11848 / C-107).